Consider the following 329-residue polypeptide: Acetyl-coenzyme A carboxylase carboxyl transferase subunit alpha (329 aa).

The region spanning 40-294 (QLESLASRRR…RAALERHLGE (255 aa)) is the CoA carboxyltransferase C-terminal domain.

The protein belongs to the AccA family. As to quaternary structure, acetyl-CoA carboxylase is a heterohexamer composed of biotin carboxyl carrier protein (AccB), biotin carboxylase (AccC) and two subunits each of ACCase subunit alpha (AccA) and ACCase subunit beta (AccD).

The protein localises to the cytoplasm. It carries out the reaction N(6)-carboxybiotinyl-L-lysyl-[protein] + acetyl-CoA = N(6)-biotinyl-L-lysyl-[protein] + malonyl-CoA. It participates in lipid metabolism; malonyl-CoA biosynthesis; malonyl-CoA from acetyl-CoA: step 1/1. Its function is as follows. Component of the acetyl coenzyme A carboxylase (ACC) complex. First, biotin carboxylase catalyzes the carboxylation of biotin on its carrier protein (BCCP) and then the CO(2) group is transferred by the carboxyltransferase to acetyl-CoA to form malonyl-CoA. This chain is Acetyl-coenzyme A carboxylase carboxyl transferase subunit alpha, found in Synechococcus sp. (strain CC9902).